The primary structure comprises 287 residues: Bifunctional protein FolD (287 aa).

Residues 165–167 (GRG), threonine 192, and valine 233 contribute to the NADP(+) site.

This sequence belongs to the tetrahydrofolate dehydrogenase/cyclohydrolase family. As to quaternary structure, homodimer.

The enzyme catalyses (6R)-5,10-methylene-5,6,7,8-tetrahydrofolate + NADP(+) = (6R)-5,10-methenyltetrahydrofolate + NADPH. The catalysed reaction is (6R)-5,10-methenyltetrahydrofolate + H2O = (6R)-10-formyltetrahydrofolate + H(+). The protein operates within one-carbon metabolism; tetrahydrofolate interconversion. Its function is as follows. Catalyzes the oxidation of 5,10-methylenetetrahydrofolate to 5,10-methenyltetrahydrofolate and then the hydrolysis of 5,10-methenyltetrahydrofolate to 10-formyltetrahydrofolate. The protein is Bifunctional protein FolD of Cutibacterium acnes (strain DSM 16379 / KPA171202) (Propionibacterium acnes).